Reading from the N-terminus, the 127-residue chain is Large ribosomal subunit protein bL12 (127 aa).

It belongs to the bacterial ribosomal protein bL12 family. In terms of assembly, homodimer. Part of the ribosomal stalk of the 50S ribosomal subunit. Forms a multimeric L10(L12)X complex, where L10 forms an elongated spine to which 2 to 4 L12 dimers bind in a sequential fashion. Binds GTP-bound translation factors.

Functionally, forms part of the ribosomal stalk which helps the ribosome interact with GTP-bound translation factors. Is thus essential for accurate translation. In Streptococcus thermophilus (strain CNRZ 1066), this protein is Large ribosomal subunit protein bL12.